Here is a 256-residue protein sequence, read N- to C-terminus: Thiazole synthase (256 aa).

Lys102 (schiff-base intermediate with DXP) is an active-site residue. Residues Gly163, 189 to 190, and 211 to 212 contribute to the 1-deoxy-D-xylulose 5-phosphate site; these read AG and AT.

Belongs to the ThiG family. In terms of assembly, homotetramer. Forms heterodimers with either ThiH or ThiS.

It localises to the cytoplasm. It carries out the reaction [ThiS sulfur-carrier protein]-C-terminal-Gly-aminoethanethioate + 2-iminoacetate + 1-deoxy-D-xylulose 5-phosphate = [ThiS sulfur-carrier protein]-C-terminal Gly-Gly + 2-[(2R,5Z)-2-carboxy-4-methylthiazol-5(2H)-ylidene]ethyl phosphate + 2 H2O + H(+). The protein operates within cofactor biosynthesis; thiamine diphosphate biosynthesis. In terms of biological role, catalyzes the rearrangement of 1-deoxy-D-xylulose 5-phosphate (DXP) to produce the thiazole phosphate moiety of thiamine. Sulfur is provided by the thiocarboxylate moiety of the carrier protein ThiS. In vitro, sulfur can be provided by H(2)S. In Nocardia farcinica (strain IFM 10152), this protein is Thiazole synthase.